The sequence spans 348 residues: Methylthioribose-1-phosphate isomerase (348 aa).

Residues 46-48, Arg-88, and Gln-194 each bind substrate; that span reads RGA. Catalysis depends on Asp-235, which acts as the Proton donor. 245–246 serves as a coordination point for substrate; it reads NK.

This sequence belongs to the eIF-2B alpha/beta/delta subunits family. MtnA subfamily.

The catalysed reaction is 5-(methylsulfanyl)-alpha-D-ribose 1-phosphate = 5-(methylsulfanyl)-D-ribulose 1-phosphate. Its pathway is amino-acid biosynthesis; L-methionine biosynthesis via salvage pathway; L-methionine from S-methyl-5-thio-alpha-D-ribose 1-phosphate: step 1/6. In terms of biological role, catalyzes the interconversion of methylthioribose-1-phosphate (MTR-1-P) into methylthioribulose-1-phosphate (MTRu-1-P). The polypeptide is Methylthioribose-1-phosphate isomerase (Desulforudis audaxviator (strain MP104C)).